The sequence spans 311 residues: MLEHKPVLLKESLDYLKCKENGIYIDATLGRGGHTEEIIKAINDRGLVIGIDRDHEAIESVKKRLKKYSSLRTVHDNFTNIPFILEQFNIKAVDGMLFDLGVSSPQFDNPERGFSYRKEGPLDMRMDKNQELTAEYIVNNFSHEELTNIFKEYGEERWASRIANFIIKSRQHKPIKTTLQLTTIIKDAIPASARRKGGHPARRTFQALRIATNDELNILKKTINHVVKFLKPGGRICIISFHSLEDRIVKKTFRELARDCVCPPDFPECVCDHKRKLKIITKKPVKPGENEVENNPRARSARLRVAERVLN.

S-adenosyl-L-methionine-binding positions include 32–34 (GGH), aspartate 52, phenylalanine 78, aspartate 99, and glutamine 106.

It belongs to the methyltransferase superfamily. RsmH family.

It is found in the cytoplasm. It carries out the reaction cytidine(1402) in 16S rRNA + S-adenosyl-L-methionine = N(4)-methylcytidine(1402) in 16S rRNA + S-adenosyl-L-homocysteine + H(+). Functionally, specifically methylates the N4 position of cytidine in position 1402 (C1402) of 16S rRNA. This is Ribosomal RNA small subunit methyltransferase H from Halothermothrix orenii (strain H 168 / OCM 544 / DSM 9562).